The sequence spans 534 residues: Blue-light-activated protein (534 aa).

One can recognise a PAS domain in the interval 20 to 93 (GKDIFFAAVE…QSIRDAIDQR (74 aa)). The residue at position 70 (cysteine 70) is an S-4a-FMN cysteine. The region spanning 94–148 (VDISTEILNYRKDGSSFWNALFISPVYNDAGELIYFFASQLDISRRRDAEEALRQ) is the PAC domain. In terms of domain architecture, Histidine kinase spans 161–390 (GIAHDFNNLL…TLRLYFPVDE (230 aa)). The residue at position 164 (histidine 164) is a Phosphohistidine; by autocatalysis. Residues 411 to 527 (RILIVEDRPD…DLARKVRQVL (117 aa)) form the Response regulatory domain. Residue aspartate 461 is modified to 4-aspartylphosphate.

Post-translationally, FMN binds covalently to cysteine after exposure to blue light and this bond is spontaneously broken in the dark.

The catalysed reaction is ATP + protein L-histidine = ADP + protein N-phospho-L-histidine.. Photosensitive kinase and response regulator that is involved in increased bacterial virulence upon exposure to light. The protein is Blue-light-activated protein of Pseudomonas syringae pv. syringae (strain B728a).